Here is a 231-residue protein sequence, read N- to C-terminus: Insertion sequence IS1162 putative ATP-binding protein (231 aa).

107 to 114 (GPTGVGKT) is a binding site for ATP.

Belongs to the IS21/IS1162 putative ATP-binding protein family.

The chain is Insertion sequence IS1162 putative ATP-binding protein from Pseudomonas fluorescens.